We begin with the raw amino-acid sequence, 228 residues long: 7-cyano-7-deazaguanine synthase (228 aa).

Tyrosine 9–methionine 19 is an ATP binding site. Positions 189, 199, 202, and 205 each coordinate Zn(2+).

Belongs to the QueC family. Requires Zn(2+) as cofactor.

The enzyme catalyses 7-carboxy-7-deazaguanine + NH4(+) + ATP = 7-cyano-7-deazaguanine + ADP + phosphate + H2O + H(+). The protein operates within purine metabolism; 7-cyano-7-deazaguanine biosynthesis. Functionally, catalyzes the ATP-dependent conversion of 7-carboxy-7-deazaguanine (CDG) to 7-cyano-7-deazaguanine (preQ(0)). In Geotalea uraniireducens (strain Rf4) (Geobacter uraniireducens), this protein is 7-cyano-7-deazaguanine synthase.